Consider the following 2273-residue polypeptide: Acetyl-CoA carboxylase, mitochondrial (2273 aa).

Residues 1–104 (KGKTITHGQS…RGNIHKHTRL (104 aa)) constitute a mitochondrion transit peptide. One can recognise a Biotin carboxylation domain in the interval 134-635 (VISKILIANN…STGWLDDLIL (502 aa)). The ATP-grasp domain maps to 292 to 484 (KTNFVSVPDD…LPATQLQIAM (193 aa)). 332-337 (GGGGKG) provides a ligand contact to ATP. Residue Arg-459 is part of the active site. In terms of domain architecture, Biotinyl-binding spans 763 to 837 (LEAELNPTQV…EAGDVIAKLT (75 aa)). N6-biotinyllysine is present on Lys-804. The 336-residue stretch at 1532 to 1867 (PYSVKDWLQP…KRDMSPPLLE (336 aa)) folds into the CoA carboxyltransferase N-terminal domain. Residues 1532–2187 (PYSVKDWLQP…EGQVIKRLQK (656 aa)) are carboxyltransferase. Residues Arg-1776, Lys-2080, and Arg-2082 each coordinate CoA. The CoA carboxyltransferase C-terminal domain occupies 1871–2187 (RWDRDVDFKP…EGQVIKRLQK (317 aa)).

Requires biotin as cofactor.

It is found in the mitochondrion. It carries out the reaction hydrogencarbonate + acetyl-CoA + ATP = malonyl-CoA + ADP + phosphate + H(+). It catalyses the reaction N(6)-biotinyl-L-lysyl-[protein] + hydrogencarbonate + ATP = N(6)-carboxybiotinyl-L-lysyl-[protein] + ADP + phosphate + H(+). Its pathway is lipid metabolism; malonyl-CoA biosynthesis; malonyl-CoA from acetyl-CoA: step 1/1. Functionally, catalyzes the rate-limiting reaction in the mitochondrial fatty acid synthesis (FAS) type II pathway. Responsible for the production of the mitochondrial malonyl-CoA, used for the biosynthesis of the cofactor lipoic acid. This protein carries three functions: biotin carboxyl carrier protein, biotin carboxylase, and carboxyltransferase. This is Acetyl-CoA carboxylase, mitochondrial (HFA1) from Saccharomyces cerevisiae (strain RM11-1a) (Baker's yeast).